The primary structure comprises 105 residues: Iron-sulfur cluster assembly protein CyaY (105 aa).

Belongs to the frataxin family.

Involved in iron-sulfur (Fe-S) cluster assembly. May act as a regulator of Fe-S biogenesis. In Chromobacterium violaceum (strain ATCC 12472 / DSM 30191 / JCM 1249 / CCUG 213 / NBRC 12614 / NCIMB 9131 / NCTC 9757 / MK), this protein is Iron-sulfur cluster assembly protein CyaY.